Consider the following 105-residue polypeptide: Small ribosomal subunit protein uS10 (105 aa).

The protein belongs to the universal ribosomal protein uS10 family. As to quaternary structure, part of the 30S ribosomal subunit.

Its function is as follows. Involved in the binding of tRNA to the ribosomes. This is Small ribosomal subunit protein uS10 from Desulfotalea psychrophila (strain LSv54 / DSM 12343).